Here is a 274-residue protein sequence, read N- to C-terminus: MTLDDLKSNSMKDQPDEKSNGDKAEGPRSLSTLRWRPAALILGLLCLGLLVTVILLIIQLSQVSDLLKQQKVKLTHQEDILEGQALAQRQAEKSSQESQRELTEMIETLAHKLDEKSKKLMELQQQNLNLQKALEKAANFSGPCPQDWLWHEENCYKFSSGPFSWEKSRENCLSLDAQLLKINSTDDLEFIQQTIAHSSFPFWMGLSLRKPNNSWLWEDGTPLMPHLFRLQGAASQMYPSGTCAYIHRGIVFAENCILNAFSICQKRANLLRAQ.

Residues 1–28 (MTLDDLKSNSMKDQPDEKSNGDKAEGPR) form a disordered region. Residues 1 to 37 (MTLDDLKSNSMKDQPDEKSNGDKAEGPRSLSTLRWRP) lie on the Cytoplasmic side of the membrane. The span at 13–26 (DQPDEKSNGDKAEG) shows a compositional bias: basic and acidic residues. The chain crosses the membrane as a helical; Signal-anchor for type II membrane protein span at residues 38-60 (AALILGLLCLGLLVTVILLIIQL). The S-palmitoyl cysteine moiety is linked to residue Cys-46. Positions 61–150 (SQVSDLLKQQ…SGPCPQDWLW (90 aa)) are neck. Over 61–274 (SQVSDLLKQQ…QKRANLLRAQ (214 aa)) the chain is Extracellular. Residues 89–142 (RQAEKSSQESQRELTEMIETLAHKLDEKSKKLMELQQQNLNLQKALEKAANFSG) are a coiled coil. An N-linked (GlcNAc...) asparagine glycan is attached at Asn-139. 3 disulfide bridges follow: Cys-144–Cys-155, Cys-172–Cys-264, and Cys-243–Cys-256. Residues 151-265 (HEENCYKFSS…CILNAFSICQ (115 aa)) form the C-type lectin domain.

In terms of assembly, homodimer; disulfide-linked. May form a hexamer composed of 3 homodimers. Interacts with HSP70. N-glycosylated.

Its subcellular location is the cell membrane. It localises to the membrane raft. The protein localises to the secreted. In terms of biological role, receptor that mediates the recognition, internalization and degradation of oxidatively modified low density lipoprotein (oxLDL) by vascular endothelial cells. OxLDL is a marker of atherosclerosis that induces vascular endothelial cell activation and dysfunction, resulting in pro-inflammatory responses, pro-oxidative conditions and apoptosis. Its association with oxLDL induces the activation of NF-kappa-B through an increased production of intracellular reactive oxygen and a variety of pro-atherogenic cellular responses including a reduction of nitric oxide (NO) release, monocyte adhesion and apoptosis. In addition to binding oxLDL, it acts as a receptor for the HSP70 protein involved in antigen cross-presentation to naive T-cells in dendritic cells, thereby participating in cell-mediated antigen cross-presentation. Also involved in inflammatory process, by acting as a leukocyte-adhesion molecule at the vascular interface in endotoxin-induced inflammation. Also acts as a receptor for advanced glycation end (AGE) products, activated platelets, monocytes, apoptotic cells and both Gram-negative and Gram-positive bacteria. The chain is Oxidized low-density lipoprotein receptor 1 (OLR1) from Sus scrofa (Pig).